We begin with the raw amino-acid sequence, 118 residues long: Small ribosomal subunit protein uS13 (118 aa).

Residues 94 to 118 (GLPVRGQRTKTNARTRKGPRKPIKK) form a disordered region.

This sequence belongs to the universal ribosomal protein uS13 family. Part of the 30S ribosomal subunit. Forms a loose heterodimer with protein S19. Forms two bridges to the 50S subunit in the 70S ribosome.

In terms of biological role, located at the top of the head of the 30S subunit, it contacts several helices of the 16S rRNA. In the 70S ribosome it contacts the 23S rRNA (bridge B1a) and protein L5 of the 50S subunit (bridge B1b), connecting the 2 subunits; these bridges are implicated in subunit movement. Contacts the tRNAs in the A and P-sites. This is Small ribosomal subunit protein uS13 from Klebsiella pneumoniae (strain 342).